Reading from the N-terminus, the 182-residue chain is Ribosome maturation factor RimM (182 aa).

Positions 103-182 (DGSYYWKDLM…TIEVDWDPGF (80 aa)) constitute a PRC barrel domain.

This sequence belongs to the RimM family. As to quaternary structure, binds ribosomal protein uS19.

The protein localises to the cytoplasm. Functionally, an accessory protein needed during the final step in the assembly of 30S ribosomal subunit, possibly for assembly of the head region. Essential for efficient processing of 16S rRNA. May be needed both before and after RbfA during the maturation of 16S rRNA. It has affinity for free ribosomal 30S subunits but not for 70S ribosomes. The protein is Ribosome maturation factor RimM of Citrobacter koseri (strain ATCC BAA-895 / CDC 4225-83 / SGSC4696).